Consider the following 211-residue polypeptide: Protein TMA23 (211 aa).

The interval 115 to 211 is disordered; sequence ASFVVSSASS…SARRDRKEHI (97 aa). Over residues 116-125 the composition is skewed to low complexity; the sequence is SFVVSSASSS. 3 stretches are compositionally biased toward basic residues: residues 140–149, 158–176, and 185–197; these read VKRKKLKKDK, KKKK…KKSK, and SKHK…KKHK. Positions 198–211 are enriched in basic and acidic residues; it reads KEESSARRDRKEHI.

In terms of assembly, forms homooligomers. Associates with ribosomal complexes.

It is found in the nucleus. The protein localises to the nucleolus. In terms of biological role, trans-acting factors of the ribosome biogenesis process. This is Protein TMA23 (TMA23) from Saccharomyces cerevisiae (strain ATCC 204508 / S288c) (Baker's yeast).